The chain runs to 306 residues: Elongation factor Ts (306 aa).

An involved in Mg(2+) ion dislocation from EF-Tu region spans residues 80–83 (TDFV).

It belongs to the EF-Ts family.

Its subcellular location is the cytoplasm. Associates with the EF-Tu.GDP complex and induces the exchange of GDP to GTP. It remains bound to the aminoacyl-tRNA.EF-Tu.GTP complex up to the GTP hydrolysis stage on the ribosome. In Clostridium novyi (strain NT), this protein is Elongation factor Ts.